A 369-amino-acid polypeptide reads, in one-letter code: S-adenosylmethionine:tRNA ribosyltransferase-isomerase (369 aa).

This sequence belongs to the QueA family. Monomer.

It localises to the cytoplasm. The catalysed reaction is 7-aminomethyl-7-carbaguanosine(34) in tRNA + S-adenosyl-L-methionine = epoxyqueuosine(34) in tRNA + adenine + L-methionine + 2 H(+). Its pathway is tRNA modification; tRNA-queuosine biosynthesis. Functionally, transfers and isomerizes the ribose moiety from AdoMet to the 7-aminomethyl group of 7-deazaguanine (preQ1-tRNA) to give epoxyqueuosine (oQ-tRNA). This chain is S-adenosylmethionine:tRNA ribosyltransferase-isomerase, found in Synechococcus sp. (strain CC9311).